The following is a 66-amino-acid chain: ATP synthase protein 8 (66 aa).

The chain crosses the membrane as a helical span at residues 8–24 (PWPMVIMSMILTLFYIT). At lysine 54 the chain carries N6-acetyllysine; alternate. N6-succinyllysine; alternate is present on lysine 54. Lysine 57 carries the N6-acetyllysine modification.

Belongs to the ATPase protein 8 family. As to quaternary structure, F-type ATPases have 2 components, CF(1) - the catalytic core - and CF(0) - the membrane proton channel. Component of an ATP synthase complex composed of ATP5PB, ATP5MC1, ATP5F1E, ATP5PD, ATP5ME, ATP5PF, ATP5MF, MT-ATP6, MT-ATP8, ATP5F1A, ATP5F1B, ATP5F1D, ATP5F1C, ATP5PO, ATP5MG, ATP5MK and ATP5MJ. Interacts with PRICKLE3.

The protein localises to the mitochondrion membrane. Functionally, mitochondrial membrane ATP synthase (F(1)F(0) ATP synthase or Complex V) produces ATP from ADP in the presence of a proton gradient across the membrane which is generated by electron transport complexes of the respiratory chain. F-type ATPases consist of two structural domains, F(1) - containing the extramembraneous catalytic core and F(0) - containing the membrane proton channel, linked together by a central stalk and a peripheral stalk. During catalysis, ATP synthesis in the catalytic domain of F(1) is coupled via a rotary mechanism of the central stalk subunits to proton translocation. Part of the complex F(0) domain. Minor subunit located with subunit a in the membrane. The protein is ATP synthase protein 8 (MT-ATP8) of Alouatta sara (Bolivian red howler monkey).